Reading from the N-terminus, the 356-residue chain is D-alanine--D-alanine ligase (356 aa).

Residues 134–339 form the ATP-grasp domain; the sequence is KQLFEHRGLP…YPELITKLIE (206 aa). ATP is bound at residue 167–222; sequence NDKLNYPVFVKPANLGSSIGISKCSNEVELKEGIKEAFQFDRKLVIEQGVNAREIE. Asp293, Glu306, and Asn308 together coordinate Mg(2+).

Belongs to the D-alanine--D-alanine ligase family. Mg(2+) is required as a cofactor. Requires Mn(2+) as cofactor.

Its subcellular location is the cytoplasm. It catalyses the reaction 2 D-alanine + ATP = D-alanyl-D-alanine + ADP + phosphate + H(+). Its pathway is cell wall biogenesis; peptidoglycan biosynthesis. Cell wall formation. This Staphylococcus aureus (strain MRSA252) protein is D-alanine--D-alanine ligase.